A 312-amino-acid polypeptide reads, in one-letter code: Homoserine kinase (312 aa).

94–104 contacts ATP; that stretch reads PLGRGLGSSAA.

Belongs to the GHMP kinase family. Homoserine kinase subfamily.

The protein resides in the cytoplasm. The enzyme catalyses L-homoserine + ATP = O-phospho-L-homoserine + ADP + H(+). Its pathway is amino-acid biosynthesis; L-threonine biosynthesis; L-threonine from L-aspartate: step 4/5. Catalyzes the ATP-dependent phosphorylation of L-homoserine to L-homoserine phosphate. The protein is Homoserine kinase of Caldanaerobacter subterraneus subsp. tengcongensis (strain DSM 15242 / JCM 11007 / NBRC 100824 / MB4) (Thermoanaerobacter tengcongensis).